The following is a 312-amino-acid chain: Aspartate carbamoyltransferase catalytic subunit (312 aa).

2 residues coordinate carbamoyl phosphate: Arg57 and Thr58. Lys85 contacts L-aspartate. The carbamoyl phosphate site is built by Arg107, His135, and Gln138. 2 residues coordinate L-aspartate: Arg168 and Arg222. Positions 264 and 265 each coordinate carbamoyl phosphate.

The protein belongs to the aspartate/ornithine carbamoyltransferase superfamily. ATCase family. As to quaternary structure, heterododecamer (2C3:3R2) of six catalytic PyrB chains organized as two trimers (C3), and six regulatory PyrI chains organized as three dimers (R2).

It carries out the reaction carbamoyl phosphate + L-aspartate = N-carbamoyl-L-aspartate + phosphate + H(+). Its pathway is pyrimidine metabolism; UMP biosynthesis via de novo pathway; (S)-dihydroorotate from bicarbonate: step 2/3. Catalyzes the condensation of carbamoyl phosphate and aspartate to form carbamoyl aspartate and inorganic phosphate, the committed step in the de novo pyrimidine nucleotide biosynthesis pathway. The chain is Aspartate carbamoyltransferase catalytic subunit from Carboxydothermus hydrogenoformans (strain ATCC BAA-161 / DSM 6008 / Z-2901).